The chain runs to 533 residues: Protein mono-ADP-ribosyltransferase PARP3 (533 aa).

The segment at 1–30 is disordered; sequence MAPKPKPWVQTEGPEKKKGRQAGREEDPFR. Lysine 6 carries the N6-(ADP-ribosyl)lysine modification. ADP-ribosyl glutamic acid is present on residues glutamate 12, glutamate 15, glutamate 26, and glutamate 34. A Nuclear localization signal motif is present at residues 14-20; the sequence is PEKKKGR. Lysine 37 carries the N6-(ADP-ribosyl)lysine modification. Residues 59–150 enclose the WGR domain; that stretch reads GTQVYEDYNC…DHFVSHPGKY (92 aa). An ADP-ribosyl aspartic acid modification is found at aspartate 141. Glutamate 163 is subject to ADP-ribosyl glutamic acid. The region spanning 182–300 is the PARP alpha-helical domain; sequence PCSLDPATQK…DIELAQALQA (119 aa). Aspartate 210 is subject to ADP-ribosyl aspartic acid. An ADP-ribosyl glutamic acid mark is found at glutamate 231, glutamate 309, glutamate 310, glutamate 344, and glutamate 449. A PARP catalytic domain is found at 313-533; it reads HPLDRDYQLL…RLRYLLEVHL (221 aa). Positions 454 to 482 are disordered; the sequence is TDNPSLKSPPPGFDSVIARGHTEPDPTQD.

The protein belongs to the ARTD/PARP family. As to quaternary structure, interacts with PARP1; leading to activate PARP1 in absence of DNA. Interacts with PRKDC. Interacts with XRCC5/Ku80; the interaction is dependent on nucleic acids. Interacts with XRCC6/Ku70; the interaction is dependent on nucleic acids. Interacts with EZH2, HDAC1, HDAC2, SUZ12, YY1, LRIG3 and LIG4. Auto-mono-ADP-ribosylated. In terms of tissue distribution, widely expressed; the highest levels are in the kidney, skeletal muscle, liver, heart and spleen; also detected in pancreas, lung, placenta, brain, leukocytes, colon, small intestine, ovary, testis, prostate and thymus.

Its subcellular location is the nucleus. The protein localises to the chromosome. It localises to the cytoplasm. The protein resides in the cytoskeleton. It is found in the microtubule organizing center. Its subcellular location is the centrosome. The protein localises to the centriole. It catalyses the reaction L-aspartyl-[protein] + NAD(+) = 4-O-(ADP-D-ribosyl)-L-aspartyl-[protein] + nicotinamide. It carries out the reaction L-glutamyl-[protein] + NAD(+) = 5-O-(ADP-D-ribosyl)-L-glutamyl-[protein] + nicotinamide. The enzyme catalyses L-lysyl-[protein] + NAD(+) = N(6)-(ADP-D-ribosyl)-L-lysyl-[protein] + nicotinamide + H(+). Its activity is regulated as follows. Mono-ADP-ribosyltransferase activity of PARP3 is selectively inhibited by ME0328 compound; ME0328 does not inhibit other ARTD/PARP enzymes, such as PARP1. Mono-ADP-ribosyltransferase is strongly inhibited by KU0058948 compound. Mono-ADP-ribosyltransferase that mediates mono-ADP-ribosylation of target proteins and plays a key role in the response to DNA damage. Mediates mono-ADP-ribosylation of glutamate, aspartate or lysine residues on target proteins. In contrast to PARP1 and PARP2, it is not able to mediate poly-ADP-ribosylation. Involved in DNA repair by mediating mono-ADP-ribosylation of a limited number of acceptor proteins involved in chromatin architecture and in DNA metabolism, such as histone H2B, XRCC5 and XRCC6. ADP-ribosylation follows DNA damage and appears as an obligatory step in a detection/signaling pathway leading to the reparation of DNA strand breaks. Involved in single-strand break repair by catalyzing mono-ADP-ribosylation of histone H2B on 'Glu-2' (H2BE2ADPr) of nucleosomes containing nicked DNA. Cooperates with the XRCC5-XRCC6 (Ku80-Ku70) heterodimer to limit end-resection thereby promoting accurate NHEJ. Suppresses G-quadruplex (G4) structures in response to DNA damage. Associates with a number of DNA repair factors and is involved in the response to exogenous and endogenous DNA strand breaks. Together with APLF, promotes the retention of the LIG4-XRCC4 complex on chromatin and accelerate DNA ligation during non-homologous end-joining (NHEJ). May link the DNA damage surveillance network to the mitotic fidelity checkpoint. Acts as a negative regulator of immunoglobulin class switch recombination, probably by controlling the level of AICDA /AID on the chromatin. In addition to proteins, also able to ADP-ribosylate DNA: mediates DNA mono-ADP-ribosylation of DNA strand break termini via covalent addition of a single ADP-ribose moiety to a 5'- or 3'-terminal phosphate residues in DNA containing multiple strand breaks. This Homo sapiens (Human) protein is Protein mono-ADP-ribosyltransferase PARP3.